The following is a 460-amino-acid chain: Proline--tRNA ligase (460 aa).

The protein belongs to the class-II aminoacyl-tRNA synthetase family. ProS type 3 subfamily. In terms of assembly, homodimer.

It is found in the cytoplasm. It carries out the reaction tRNA(Pro) + L-proline + ATP = L-prolyl-tRNA(Pro) + AMP + diphosphate. Its function is as follows. Catalyzes the attachment of proline to tRNA(Pro) in a two-step reaction: proline is first activated by ATP to form Pro-AMP and then transferred to the acceptor end of tRNA(Pro). In Methanococcus maripaludis (strain C5 / ATCC BAA-1333), this protein is Proline--tRNA ligase.